The sequence spans 89 residues: Small ribosomal subunit protein bS16 (89 aa).

It belongs to the bacterial ribosomal protein bS16 family.

This chain is Small ribosomal subunit protein bS16, found in Nitrosomonas europaea (strain ATCC 19718 / CIP 103999 / KCTC 2705 / NBRC 14298).